Here is an 89-residue protein sequence, read N- to C-terminus: Venom peptide BmKAPI (89 aa).

The N-terminal stretch at 1–22 is a signal peptide; it reads MKFVFASFALFVIFLCFSQSLS. Cystine bridges form between cysteine 28–cysteine 66, cysteine 37–cysteine 62, cysteine 41–cysteine 55, cysteine 46–cysteine 86, and cysteine 68–cysteine 80. The 59-residue stretch at 28–86 folds into the TIL domain; sequence CRDNEVFDNCISNCGPPRCSNILNTYPCTNLGPLCTPGCKCKDGRVYDNQGRCVLQTEC.

Belongs to the serine protease inhibitor-like (TIL domain-containing) family. In terms of tissue distribution, expressed by the venom gland.

It is found in the secreted. In terms of biological role, serine protease inhibitor. The chain is Venom peptide BmKAPI from Olivierus martensii (Manchurian scorpion).